Here is a 612-residue protein sequence, read N- to C-terminus: Dihydroxy-acid dehydratase (612 aa).

Position 81 (Asp-81) interacts with Mg(2+). Cys-122 serves as a coordination point for [2Fe-2S] cluster. Mg(2+)-binding residues include Asp-123 and Lys-124. Lys-124 bears the N6-carboxylysine mark. Residue Cys-195 coordinates [2Fe-2S] cluster. Glu-491 lines the Mg(2+) pocket. Ser-517 acts as the Proton acceptor in catalysis.

It belongs to the IlvD/Edd family. Homodimer. The cofactor is [2Fe-2S] cluster. Mg(2+) is required as a cofactor.

The catalysed reaction is (2R)-2,3-dihydroxy-3-methylbutanoate = 3-methyl-2-oxobutanoate + H2O. It catalyses the reaction (2R,3R)-2,3-dihydroxy-3-methylpentanoate = (S)-3-methyl-2-oxopentanoate + H2O. Its pathway is amino-acid biosynthesis; L-isoleucine biosynthesis; L-isoleucine from 2-oxobutanoate: step 3/4. It functions in the pathway amino-acid biosynthesis; L-valine biosynthesis; L-valine from pyruvate: step 3/4. Its function is as follows. Functions in the biosynthesis of branched-chain amino acids. Catalyzes the dehydration of (2R,3R)-2,3-dihydroxy-3-methylpentanoate (2,3-dihydroxy-3-methylvalerate) into 2-oxo-3-methylpentanoate (2-oxo-3-methylvalerate) and of (2R)-2,3-dihydroxy-3-methylbutanoate (2,3-dihydroxyisovalerate) into 2-oxo-3-methylbutanoate (2-oxoisovalerate), the penultimate precursor to L-isoleucine and L-valine, respectively. This chain is Dihydroxy-acid dehydratase, found in Buchnera aphidicola subsp. Baizongia pistaciae (strain Bp).